An 813-amino-acid chain; its full sequence is Lon protease (813 aa).

Residues 14 to 207 form the Lon N-terminal domain; that stretch reads LPLLPLRGII…ILTEILAREM (194 aa). ATP is bound at residue 359 to 366; that stretch reads GPPGVGKT. A Lon proteolytic domain is found at 595–776; the sequence is ESQVGVATGL…DQVIREALLE (182 aa). Catalysis depends on residues S682 and K725.

It belongs to the peptidase S16 family. Homohexamer. Organized in a ring with a central cavity.

The protein localises to the cytoplasm. The catalysed reaction is Hydrolysis of proteins in presence of ATP.. ATP-dependent serine protease that mediates the selective degradation of mutant and abnormal proteins as well as certain short-lived regulatory proteins. Required for cellular homeostasis and for survival from DNA damage and developmental changes induced by stress. Degrades polypeptides processively to yield small peptide fragments that are 5 to 10 amino acids long. Binds to DNA in a double-stranded, site-specific manner. The polypeptide is Lon protease (Heliobacterium modesticaldum (strain ATCC 51547 / Ice1)).